The primary structure comprises 199 residues: 7-methyl-GTP pyrophosphatase (199 aa).

The active-site Proton acceptor is Asp-76.

Belongs to the Maf family. YceF subfamily. It depends on a divalent metal cation as a cofactor.

The protein localises to the cytoplasm. The catalysed reaction is N(7)-methyl-GTP + H2O = N(7)-methyl-GMP + diphosphate + H(+). Nucleoside triphosphate pyrophosphatase that hydrolyzes 7-methyl-GTP (m(7)GTP). May have a dual role in cell division arrest and in preventing the incorporation of modified nucleotides into cellular nucleic acids. The sequence is that of 7-methyl-GTP pyrophosphatase from Mesorhizobium japonicum (strain LMG 29417 / CECT 9101 / MAFF 303099) (Mesorhizobium loti (strain MAFF 303099)).